The following is a 341-amino-acid chain: MQKSYSLQELATQIGATVRGNADVVVENIAPLDKAQSNQLTFISNVKFRALLKDSKAGILVVSEEDVEHCSPESNLLIVKDPYVAYAILAQYMDSTPKAAQGIAKSAVIFDGVLLGENVSIGANAVIEEGVVLGDNVIIGANCFVGKNTKIGSGTQLWANVTVYHNVEIGANCLIQSGTVIGSDGFGYANDRGRWIKIPQVGQVIIGNNVEIGANTCIDRGALDATIIEDNVIIDNLCQIAHNVHIGTGTAVAGGVIMAGSLTVGRYCLIGGASVINGHMEICDKVTITGMGMVMRPITEPGVYSSGIPLQTNKEWRKTAALTLGIDGINKRLKALEKKIS.

H242 acts as the Proton acceptor in catalysis.

This sequence belongs to the transferase hexapeptide repeat family. LpxD subfamily. In terms of assembly, homotrimer.

It catalyses the reaction a UDP-3-O-[(3R)-3-hydroxyacyl]-alpha-D-glucosamine + a (3R)-hydroxyacyl-[ACP] = a UDP-2-N,3-O-bis[(3R)-3-hydroxyacyl]-alpha-D-glucosamine + holo-[ACP] + H(+). The protein operates within bacterial outer membrane biogenesis; LPS lipid A biosynthesis. Its function is as follows. Catalyzes the N-acylation of UDP-3-O-acylglucosamine using 3-hydroxyacyl-ACP as the acyl donor. Is involved in the biosynthesis of lipid A, a phosphorylated glycolipid that anchors the lipopolysaccharide to the outer membrane of the cell. The polypeptide is UDP-3-O-acylglucosamine N-acyltransferase (Haemophilus influenzae (strain 86-028NP)).